The primary structure comprises 279 residues: Nitrate import permease protein NrtB (279 aa).

Transmembrane regions (helical) follow at residues 25-45, 91-111, 149-169, 200-220, and 249-269; these read FLPYVVCLPIFLAIWQVISAI, VAIGYLLAACTGILVGGVLGM, AIFVIFITAIWPIIINTAVGI, VPYVFAGLRIAVGLAWLAIVA, and IILAIFYVGLVGLSLDRLVAW. Positions 84 to 267 constitute an ABC transmembrane type-1 domain; that stretch reads ILISLQRVAI…LVGLSLDRLV (184 aa).

Belongs to the binding-protein-dependent transport system permease family. CysTW subfamily. The complex is composed of two ATP-binding proteins (NrtC and NrtD), two transmembrane proteins (NrtB) and a solute-binding protein (NrtA).

Its subcellular location is the cell inner membrane. Part of the ABC transporter complex NrtABCD involved in nitrate uptake. The complex is probably also involved in nitrite transport. Probably responsible for the translocation of the substrate across the membrane. The protein is Nitrate import permease protein NrtB of Synechococcus elongatus (strain ATCC 33912 / PCC 7942 / FACHB-805) (Anacystis nidulans R2).